The chain runs to 455 residues: Anthocyanidin 3-O-glucosyltransferase (455 aa).

The active-site Proton acceptor is the His-18. His-18 contributes to the an anthocyanidin binding site. Asp-118 serves as the catalytic Charge relay. A UDP-alpha-D-glucose-binding site is contributed by Thr-139. Residue His-148 participates in an anthocyanidin binding. UDP-alpha-D-glucose is bound by residues Ala-336, Gln-338, His-353, Trp-356, Ser-358, and Glu-361. Gly-376 contacts an anthocyanidin. 2 residues coordinate UDP-alpha-D-glucose: Asp-377 and Gln-378.

It belongs to the UDP-glycosyltransferase family.

It carries out the reaction an anthocyanidin + UDP-alpha-D-glucose + H(+) = an anthocyanidin 3-O-beta-D-glucoside + UDP. It functions in the pathway pigment biosynthesis; anthocyanin biosynthesis. Functionally, in the presence of other necessary color factors, this glycosylation reaction allows the accumulation of anthocyanin pigments. The polypeptide is Anthocyanidin 3-O-glucosyltransferase (BZ1) (Hordeum vulgare (Barley)).